The primary structure comprises 314 residues: Protein phosphatase PTC7 homolog fig (314 aa).

In terms of domain architecture, PPM-type phosphatase spans 43–309; the sequence is PYLVTVVQGR…DDITLILSSV (267 aa). Residues D87, G88, and D232 each coordinate Mn(2+).

It belongs to the PP2C family. It depends on Mg(2+) as a cofactor. The cofactor is Mn(2+).

The catalysed reaction is O-phospho-L-seryl-[protein] + H2O = L-seryl-[protein] + phosphate. The enzyme catalyses O-phospho-L-threonyl-[protein] + H2O = L-threonyl-[protein] + phosphate. The protein is Protein phosphatase PTC7 homolog fig of Drosophila simulans (Fruit fly).